Reading from the N-terminus, the 169-residue chain is UPF0303 protein Oant_1766 (169 aa).

Belongs to the UPF0303 family.

This chain is UPF0303 protein Oant_1766, found in Brucella anthropi (strain ATCC 49188 / DSM 6882 / CCUG 24695 / JCM 21032 / LMG 3331 / NBRC 15819 / NCTC 12168 / Alc 37) (Ochrobactrum anthropi).